The following is a 162-amino-acid chain: NADH-quinone oxidoreductase subunit I (162 aa).

4Fe-4S ferredoxin-type domains are found at residues 53 to 83 and 93 to 122; these read LRRYPNGEERCIACKLCEAVCPAMAITIESE and TRYDIDLTKCIFCGFCEESCPVDSIVETHI. Positions 63, 66, 69, 73, 102, 105, 108, and 112 each coordinate [4Fe-4S] cluster.

The protein belongs to the complex I 23 kDa subunit family. NDH-1 is composed of 14 different subunits. Subunits NuoA, H, J, K, L, M, N constitute the membrane sector of the complex. [4Fe-4S] cluster is required as a cofactor.

The protein localises to the cell inner membrane. It catalyses the reaction a quinone + NADH + 5 H(+)(in) = a quinol + NAD(+) + 4 H(+)(out). Functionally, NDH-1 shuttles electrons from NADH, via FMN and iron-sulfur (Fe-S) centers, to quinones in the respiratory chain. The immediate electron acceptor for the enzyme in this species is believed to be ubiquinone. Couples the redox reaction to proton translocation (for every two electrons transferred, four hydrogen ions are translocated across the cytoplasmic membrane), and thus conserves the redox energy in a proton gradient. The chain is NADH-quinone oxidoreductase subunit I from Herminiimonas arsenicoxydans.